The following is a 284-amino-acid chain: Bifunctional protein FolD (284 aa).

Residues 165–167 (GRS) and S190 each bind NADP(+).

It belongs to the tetrahydrofolate dehydrogenase/cyclohydrolase family. In terms of assembly, homodimer.

The enzyme catalyses (6R)-5,10-methylene-5,6,7,8-tetrahydrofolate + NADP(+) = (6R)-5,10-methenyltetrahydrofolate + NADPH. The catalysed reaction is (6R)-5,10-methenyltetrahydrofolate + H2O = (6R)-10-formyltetrahydrofolate + H(+). Its pathway is one-carbon metabolism; tetrahydrofolate interconversion. Functionally, catalyzes the oxidation of 5,10-methylenetetrahydrofolate to 5,10-methenyltetrahydrofolate and then the hydrolysis of 5,10-methenyltetrahydrofolate to 10-formyltetrahydrofolate. The chain is Bifunctional protein FolD from Streptococcus gordonii (strain Challis / ATCC 35105 / BCRC 15272 / CH1 / DL1 / V288).